The sequence spans 426 residues: MSEILSVKAREILDSRGNPTVEAEVILDSGYSGTAAVPSGASTGSREALELRDGDPARYLGKGVLQAVQNVNDEIAPKVIGMDGRDQVGLDSFLIELDGTENKGRLGANAILSVSMAAAKAAAAECELPLYRYLGGAMASLLPVPMMNVINGGAHADNNVDIQEFMIVPAGAPTFGEALRMGAETFHNLKKVLKSKGLNTAVGDEGGFAPNLSSNEEAMEVLMQAIEAAGYRPGEDIYIAIDAAASEFYKDGSYHMSAEQSPTKSAEEMIAFYEAWAGRYPLICIEDGMAEGDWGGWQALTRKLGYNVQLVGDDVFVTNTSIIAKGIADGVANSVLIKLNQIGTVTETLQAINMAFKAGYTVVISHRSGETEDTTIADLAVATNAGQIKTGSLSRSERIAKYNQLLRIEEELGASGCYAGMSAFRV.

A (2R)-2-phosphoglycerate-binding site is contributed by Gln-163. The active-site Proton donor is the Glu-205. Positions 242, 286, and 313 each coordinate Mg(2+). Positions 338, 367, 368, and 389 each coordinate (2R)-2-phosphoglycerate. Lys-338 acts as the Proton acceptor in catalysis.

It belongs to the enolase family. Mg(2+) is required as a cofactor.

The protein resides in the cytoplasm. It is found in the secreted. The protein localises to the cell surface. It catalyses the reaction (2R)-2-phosphoglycerate = phosphoenolpyruvate + H2O. Its pathway is carbohydrate degradation; glycolysis; pyruvate from D-glyceraldehyde 3-phosphate: step 4/5. In terms of biological role, catalyzes the reversible conversion of 2-phosphoglycerate (2-PG) into phosphoenolpyruvate (PEP). It is essential for the degradation of carbohydrates via glycolysis. The protein is Enolase of Syntrophobacter fumaroxidans (strain DSM 10017 / MPOB).